Reading from the N-terminus, the 493-residue chain is Intermediate cleaving peptidase 55, mitochondrial (493 aa).

The N-terminal 19 residues, 1–19 (MQFLARNLVRRVSRTQVVS), are a transit peptide targeting the mitochondrion. Residues Asp296, Asp307, His383, Glu410, and Glu433 each contribute to the Mn(2+) site.

Belongs to the peptidase M24B family. It depends on Mn(2+) as a cofactor.

Its subcellular location is the mitochondrion. The protein resides in the nucleus. Functionally, aminopeptidase which cleaves preprotein intermediates that carry destabilizing N-ter amino acid residues after the mitochondrial processing peptidase (MPP) cleavage site and is thus critical for stabilization of the mitochondrial proteome. The polypeptide is Intermediate cleaving peptidase 55, mitochondrial (Arabidopsis thaliana (Mouse-ear cress)).